The following is a 377-amino-acid chain: Probable multidrug ABC transporter permease YbhS (377 aa).

The Cytoplasmic portion of the chain corresponds to 1–28 (MSNPILSWRRVRALCVKETRQIVRDPSS). Residues 29-49 (WLIAVVIPLLLLFIFGYGINL) form a helical membrane-spanning segment. Over 50–181 (DSSKLRVGIL…WFNPAAISQH (132 aa)) the chain is Periplasmic. An ABC transmembrane type-2 domain is found at 145–375 (IWQIWQMQRA…GLTWLKTKRR (231 aa)). A helical membrane pass occupies residues 182 to 202 (FIIPGAVTIIMTVIGAILTSL). Over 203–234 (VVAREWERGTMEALLSTEITRTELLLCKLIPY) the chain is Cytoplasmic. A helical transmembrane segment spans residues 235 to 255 (YFLGMLAMLLCMLVSVFILGV). The Periplasmic portion of the chain corresponds to 256-261 (PYRGSL). The chain crosses the membrane as a helical span at residues 262-282 (LILFFISSLFLLSTLGMGLLI). Residues 283-291 (STITRNQFN) are Cytoplasmic-facing. The chain crosses the membrane as a helical span at residues 292–312 (AAQVALNAAFLPSIMLSGFIF). The Periplasmic portion of the chain corresponds to 313-345 (QIDSMPAVIRAVTYIIPARYFVSTLQSLFLAGN). Residues 346 to 366 (IPVVLVVNVLFLIASAVMFIG) form a helical membrane-spanning segment. Topologically, residues 367–377 (LTWLKTKRRLD) are cytoplasmic.

It belongs to the ABC-2 integral membrane protein family. In terms of assembly, the complex is probably composed of two ATP-binding proteins (YbhF) and two transmembrane proteins (YbhR and YbhS).

It is found in the cell inner membrane. In terms of biological role, part of the ABC transporter complex YbhFSR that could be involved in efflux of cefoperazone. Probably involved in the translocation of the substrate across the membrane. In Escherichia coli O157:H7, this protein is Probable multidrug ABC transporter permease YbhS (ybhS).